The chain runs to 184 residues: Protein PPLZ12 (184 aa).

The protein is Protein PPLZ12 (PPLZ12) of Lupinus polyphyllus (Large-leaved lupine).